A 345-amino-acid chain; its full sequence is Biotin synthase (345 aa).

One can recognise a Radical SAM core domain in the interval 67-295 (YKVQLASLLS…KSRIRLSAGR (229 aa)). Residues Cys82, Cys86, and Cys89 each contribute to the [4Fe-4S] cluster site. Positions 126, 158, 218, and 290 each coordinate [2Fe-2S] cluster.

Belongs to the radical SAM superfamily. Biotin synthase family. Homodimer. The cofactor is [4Fe-4S] cluster. Requires [2Fe-2S] cluster as cofactor.

It carries out the reaction (4R,5S)-dethiobiotin + (sulfur carrier)-SH + 2 reduced [2Fe-2S]-[ferredoxin] + 2 S-adenosyl-L-methionine = (sulfur carrier)-H + biotin + 2 5'-deoxyadenosine + 2 L-methionine + 2 oxidized [2Fe-2S]-[ferredoxin]. It participates in cofactor biosynthesis; biotin biosynthesis; biotin from 7,8-diaminononanoate: step 2/2. Functionally, catalyzes the conversion of dethiobiotin (DTB) to biotin by the insertion of a sulfur atom into dethiobiotin via a radical-based mechanism. The protein is Biotin synthase of Prochlorococcus marinus (strain NATL2A).